The sequence spans 176 residues: NAD(P)H-quinone oxidoreductase subunit J (176 aa).

The segment at 1–32 (MEKEGLAKSSDTSIKKEGFISQSLSKDGIPNQ) is disordered. Polar residues predominate over residues 20–32 (ISQSLSKDGIPNQ).

The protein belongs to the complex I 30 kDa subunit family. As to quaternary structure, NDH-1 can be composed of about 15 different subunits; different subcomplexes with different compositions have been identified which probably have different functions.

It is found in the cellular thylakoid membrane. It carries out the reaction a plastoquinone + NADH + (n+1) H(+)(in) = a plastoquinol + NAD(+) + n H(+)(out). The enzyme catalyses a plastoquinone + NADPH + (n+1) H(+)(in) = a plastoquinol + NADP(+) + n H(+)(out). Its function is as follows. NDH-1 shuttles electrons from an unknown electron donor, via FMN and iron-sulfur (Fe-S) centers, to quinones in the respiratory and/or the photosynthetic chain. The immediate electron acceptor for the enzyme in this species is believed to be plastoquinone. Couples the redox reaction to proton translocation, and thus conserves the redox energy in a proton gradient. Cyanobacterial NDH-1 also plays a role in inorganic carbon-concentration. This is NAD(P)H-quinone oxidoreductase subunit J from Prochlorococcus marinus (strain MIT 9215).